Consider the following 108-residue polypeptide: Cytochrome c oxidase subunit 1 (108 aa).

Residues Ala10–Val30 form a helical membrane-spanning segment. Position 49 (His49) interacts with heme a3. A run of 2 helical transmembrane segments spans residues Phe50–Leu70 and Leu85–His105. His51 serves as a coordination point for Fe(II)-heme a.

It belongs to the heme-copper respiratory oxidase family. It depends on heme as a cofactor. Requires Cu cation as cofactor.

The protein resides in the cell membrane. The enzyme catalyses 4 Fe(II)-[cytochrome c] + O2 + 8 H(+)(in) = 4 Fe(III)-[cytochrome c] + 2 H2O + 4 H(+)(out). It participates in energy metabolism; oxidative phosphorylation. The polypeptide is Cytochrome c oxidase subunit 1 (cbaA) (Thermus thermophilus).